We begin with the raw amino-acid sequence, 676 residues long: MLKPERMVRVSVVGPREKLGETADLLHRLNLVHIEEPEESEYFRIGEPHPDASVVSRALVQMRSFISHLKLDPSRIVPRRKFRESEIEAQLKEKLDEYQQLIGERIEYLRSVDEKIASLQEQLNQIEPLKRLGIPARLLKGYKTLRVFVGFVKENPTEKFAQVTSDFEVFATEYEKELVVAVFVKAEYGDEFLRILQECGYREIQVPDVEDFEAKISEIEKEIESLKSRKEQVEKEIEEVKVKEAETLLAIEEYLSSQMDKYELPLRTLVSKYSFVLVGYLPAKALNEFKAKMDANGVAVEVLDEEGEPPTKLSNPAGVRNFELLTTTFGIPKYKEIDPTVFIAIFFPIFFGMMLGDIGYGLLVTVISLYLKRVFKTEGWQRMLNIGVYAGVMSIIFGFIYGECFGPFIVPGEYEPYQIHFIGSQLEHLYEFHHGHPIFDRVEEMGVKILLFATIVIGIAKILFGFALGFYNVYVEHGLKDAILEKLSWIIGVLGLAMIIFGFAYNVGVFYQLGMGPNPGDVPPLPLPGLMEGWQAGLNVYYLAALPLLVVWFILFVMGEVPKMGAMGVILAVELLTWFGQIMSYARLLAIGLSSVYIAFVINFIGMKLIDPVGISIPIVGAIVLLIGHVGNLILGILDPGLQSLRLHYVEFFTKFFEGGGRLYEPFGRIKRFIEE.

Helical transmembrane passes span 341-361 (VFIA…IGYG), 390-410 (AGVM…PFIV), 449-469 (ILLF…FALG), 490-510 (IIGV…VGVF), 538-558 (LNVY…LFVM), 564-584 (MGAM…QIMS), 590-610 (AIGL…MKLI), and 617-637 (IPIV…ILGI).

This sequence belongs to the V-ATPase 116 kDa subunit family. In terms of assembly, has multiple subunits with at least A(3), B(3), C, D, E, F, H, I and proteolipid K(x).

The protein resides in the cell membrane. Functionally, component of the A-type ATP synthase that produces ATP from ADP in the presence of a proton gradient across the membrane. In Archaeoglobus fulgidus (strain ATCC 49558 / DSM 4304 / JCM 9628 / NBRC 100126 / VC-16), this protein is A-type ATP synthase subunit I.